We begin with the raw amino-acid sequence, 546 residues long: Chaperonin GroEL (546 aa).

ATP is bound by residues 30-33 (TLGP), Lys-51, 87-91 (DGTTT), Gly-415, 479-481 (NAA), and Asp-495.

Belongs to the chaperonin (HSP60) family. In terms of assembly, forms a cylinder of 14 subunits composed of two heptameric rings stacked back-to-back. Interacts with the co-chaperonin GroES.

It localises to the cytoplasm. The enzyme catalyses ATP + H2O + a folded polypeptide = ADP + phosphate + an unfolded polypeptide.. In terms of biological role, together with its co-chaperonin GroES, plays an essential role in assisting protein folding. The GroEL-GroES system forms a nano-cage that allows encapsulation of the non-native substrate proteins and provides a physical environment optimized to promote and accelerate protein folding. This Xanthomonas campestris pv. phaseoli protein is Chaperonin GroEL.